The primary structure comprises 308 residues: Ribosomal RNA small subunit methyltransferase H (308 aa).

S-adenosyl-L-methionine contacts are provided by residues 38 to 40, aspartate 58, phenylalanine 82, aspartate 99, and glutamine 106; that span reads GGH.

It belongs to the methyltransferase superfamily. RsmH family.

The protein localises to the cytoplasm. The catalysed reaction is cytidine(1402) in 16S rRNA + S-adenosyl-L-methionine = N(4)-methylcytidine(1402) in 16S rRNA + S-adenosyl-L-homocysteine + H(+). Functionally, specifically methylates the N4 position of cytidine in position 1402 (C1402) of 16S rRNA. The chain is Ribosomal RNA small subunit methyltransferase H from Acidovorax ebreus (strain TPSY) (Diaphorobacter sp. (strain TPSY)).